Here is an 81-residue protein sequence, read N- to C-terminus: Xenopsin peptides (81 aa).

The first 20 residues, 1-20 (MYKGIFLCVLLAVICANSLA), serve as a signal peptide directing secretion. Positions 21 to 37 (TPSSDADEDNDEVERYV) are excised as a propeptide. Positions 65-73 (EAMLRSAEA) are cleaved as a propeptide — removed in mature form by a dipeptidylpeptidase.

The protein belongs to the gastrin/cholecystokinin family. Magainin subfamily. In terms of tissue distribution, XPF is synthesized in the stomach and stored in a novel granular multinucleated cell in the gastric mucosa, it is stored as active, processed peptides in large granules within the granular gland secretions of the skin.

The protein resides in the secreted. Its function is as follows. Xenopsin is a neurotensin-like octapeptide. XPF has antimicrobial activity. In Xenopus laevis (African clawed frog), this protein is Xenopsin peptides.